The primary structure comprises 57 residues: UPF0391 membrane protein AZOSEA39630 (57 aa).

Helical transmembrane passes span 4 to 24 and 37 to 57; these read WAII…TGVA and IALA…VLVF.

Belongs to the UPF0391 family.

It is found in the cell membrane. The polypeptide is UPF0391 membrane protein AZOSEA39630 (Aromatoleum aromaticum (strain DSM 19018 / LMG 30748 / EbN1) (Azoarcus sp. (strain EbN1))).